We begin with the raw amino-acid sequence, 241 residues long: Uridylate kinase (241 aa).

12–15 (KLSG) provides a ligand contact to ATP. The segment at 20-25 (GATGYG) is involved in allosteric activation by GTP. G54 is a binding site for UMP. ATP contacts are provided by G55 and R59. UMP contacts are provided by residues D74 and 135–142 (TGNPYMTT). N163, Y169, and D172 together coordinate ATP.

It belongs to the UMP kinase family. As to quaternary structure, homohexamer.

It localises to the cytoplasm. It catalyses the reaction UMP + ATP = UDP + ADP. It functions in the pathway pyrimidine metabolism; CTP biosynthesis via de novo pathway; UDP from UMP (UMPK route): step 1/1. Allosterically activated by GTP. Inhibited by UTP. In terms of biological role, catalyzes the reversible phosphorylation of UMP to UDP. This Dehalococcoides mccartyi (strain CBDB1) protein is Uridylate kinase.